The chain runs to 458 residues: Sulfite exporter TauE/SafE family protein 2 (458 aa).

Transmembrane regions (helical) follow at residues 5–25 (FVPIILSFIIFLTPSIAEQEP), 53–73 (IELTTSTIIAGLLSFLASSIS), 74–94 (SAGGIGGGGLYVPIMTIVAGL), 101–121 (SFSAFMVTGGSIANVGCNLFV), 128–148 (GKTLIDFDLALLLEPCMLLGV), 150–170 (IGVICNLVFPNWLITSLFAVF), 227–247 (FPWIKLGVLVIIWLSYFAVYL), 267–287 (YWLISSSQIPLTLFFTLWICF), 324–344 (VMALLAGVLGGVFGIGGGMLI), 348–368 (LLQVGIAPEVTAATCSFMVLF), 386–406 (GTASIFAVICFVASLVGLKVV), and 418–438 (IIVFSVGIVMALSIVLMTSYG).

The protein belongs to the 4-toluene sulfonate uptake permease (TSUP) (TC 2.A.102) family.

It localises to the membrane. The sequence is that of Sulfite exporter TauE/SafE family protein 2 from Arabidopsis thaliana (Mouse-ear cress).